A 583-amino-acid chain; its full sequence is Bifunctional dihydrofolate reductase-thymidylate synthase (583 aa).

The DHFR domain maps to Asp9–Lys229. An NADP(+)-binding site is contributed by Gly36–Gly42. Position 51 (Asp51) interacts with substrate. Residues Lys104–Ser106 and Leu125–Thr128 each bind NADP(+). Substrate-binding residues include Ile165, Tyr171, and Thr186. Gly166–Glu173 is an NADP(+) binding site. The segment at His298–Ala583 is thymidylate synthase. Arg320 contacts dUMP. Residue Cys465 is part of the active site. Residues His466, Gln484–Asp488, Asn496, and His526–Tyr528 contribute to the dUMP site.

This sequence in the N-terminal section; belongs to the dihydrofolate reductase family. It in the C-terminal section; belongs to the thymidylate synthase family. As to quaternary structure, homodimer.

It catalyses the reaction (6S)-5,6,7,8-tetrahydrofolate + NADP(+) = 7,8-dihydrofolate + NADPH + H(+). It carries out the reaction dUMP + (6R)-5,10-methylene-5,6,7,8-tetrahydrofolate = 7,8-dihydrofolate + dTMP. Its pathway is cofactor biosynthesis; tetrahydrofolate biosynthesis; 5,6,7,8-tetrahydrofolate from 7,8-dihydrofolate: step 1/1. Functionally, bifunctional enzyme. Involved in de novo dTMP biosynthesis. Key enzyme in folate metabolism. Catalyzes an essential reaction for de novo glycine and purine synthesis, DNA precursor synthesis, and for the conversion of dUMP to dTMP. This is Bifunctional dihydrofolate reductase-thymidylate synthase from Plasmodium chabaudi.